The sequence spans 95 residues: Beta-defensin 132 (95 aa).

Positions 1–22 (MKFLLLVLAALRFLTQVIPASA) are cleaved as a signal peptide. Intrachain disulfides connect cysteine 27–cysteine 55, cysteine 35–cysteine 49, and cysteine 39–cysteine 56. A disordered region spans residues 72 to 95 (GNHWQSRRRNTQRKDKKQQTTVTS). Residues 76–87 (QSRRRNTQRKDK) are compositionally biased toward basic residues.

The protein belongs to the beta-defensin family.

The protein resides in the secreted. Functionally, has antibacterial activity. This Pongo pygmaeus (Bornean orangutan) protein is Beta-defensin 132 (DEFB132).